A 347-amino-acid chain; its full sequence is DNA-directed RNA polymerase subunit alpha (347 aa).

An alpha N-terminal domain (alpha-NTD) region spans residues 1–226 (MLISQRPTLS…ELFGLARELN (226 aa)). Residues 243–347 (HIASFALPID…EQDYAETEQL (105 aa)) form an alpha C-terminal domain (alpha-CTD) region.

The protein belongs to the RNA polymerase alpha chain family. In terms of assembly, homodimer. The RNAP catalytic core consists of 2 alpha, 1 beta, 1 beta' and 1 omega subunit. When a sigma factor is associated with the core the holoenzyme is formed, which can initiate transcription.

The enzyme catalyses RNA(n) + a ribonucleoside 5'-triphosphate = RNA(n+1) + diphosphate. Functionally, DNA-dependent RNA polymerase catalyzes the transcription of DNA into RNA using the four ribonucleoside triphosphates as substrates. This chain is DNA-directed RNA polymerase subunit alpha, found in Mycobacterium bovis (strain ATCC BAA-935 / AF2122/97).